The primary structure comprises 389 residues: MEKAIRNFLSQESAGGILLLVAVVLAMLMANSPLAGLYQGFLGTEVQVRVGALDLHKPLLLWINDGLMALFFLLIGLEVKRELLEGALSSVAQASLPTFAAIGGMLVPAGIYLLFNYGDPVTQVGWAIPAATDIAFALGIMALLGSRVPVALKVFLLALAIIDDLGVIVIIALFYSSDLSTISLIIASIAIVGLVALNRKGVTALAPYGVLGLVLWVAVLKSGVHATLAGVIIAFCIPLRAKDGSSPSEHLEHSLHPWSTFLILPVFAFANAGVALGNMSLDALISPVPVGIALGLMLGKPIGVMLFSYVAVKLKLAQLPDGIGWKQIAPVAAMCGIGFTMSMFIASLAFEQADPMFGDLARLGTLIGSILAALIGYFWLSKVLPKKGV.

Transmembrane regions (helical) follow at residues 17–37 (ILLL…LAGL), 59–79 (LLLW…GLEV), 95–115 (SLPT…YLLF), 124–144 (VGWA…MALL), 154–174 (VFLL…IALF), 177–197 (SDLS…LVAL), 213–233 (LVLW…GVII), 261–281 (FLIL…NMSL), 287–307 (PVPV…VMLF), 328–348 (IAPV…IASL), and 363–383 (LGTL…LSKV).

The protein belongs to the NhaA Na(+)/H(+) (TC 2.A.33) antiporter family.

Its subcellular location is the cell inner membrane. The catalysed reaction is Na(+)(in) + 2 H(+)(out) = Na(+)(out) + 2 H(+)(in). In terms of biological role, na(+)/H(+) antiporter that extrudes sodium in exchange for external protons. This Shewanella sp. (strain ANA-3) protein is Na(+)/H(+) antiporter NhaA.